We begin with the raw amino-acid sequence, 286 residues long: Phosphate import ATP-binding protein PstB (286 aa).

Residues 40 to 281 form the ABC transporter domain; that stretch reads VVAKDFSIFY…PRDRMTEDYI (242 aa). 72-79 serves as a coordination point for ATP; it reads GPSGCGKS.

Belongs to the ABC transporter superfamily. Phosphate importer (TC 3.A.1.7) family. In terms of assembly, the complex is composed of two ATP-binding proteins (PstB), two transmembrane proteins (PstC and PstA) and a solute-binding protein (PstS).

Its subcellular location is the cell inner membrane. It carries out the reaction phosphate(out) + ATP + H2O = ADP + 2 phosphate(in) + H(+). Functionally, part of the ABC transporter complex PstSACB involved in phosphate import. Responsible for energy coupling to the transport system. The sequence is that of Phosphate import ATP-binding protein PstB from Chlorobium luteolum (strain DSM 273 / BCRC 81028 / 2530) (Pelodictyon luteolum).